Here is a 65-residue protein sequence, read N- to C-terminus: Alpha-toxin OD1 (65 aa).

The LCN-type CS-alpha/beta domain occupies 3 to 65; the sequence is RDAYIADDKN…VPIRIPGKCR (63 aa). Positions 9-11 match the Important for toxin selectivity for individual Nav channel subtype (Nav1.6/SCN8A and Nav1.7/SCN9A), but not for toxin potency motif; it reads DDK. 4 disulfide bridges follow: cysteine 13–cysteine 64, cysteine 17–cysteine 37, cysteine 23–cysteine 47, and cysteine 27–cysteine 49. Arginine amide is present on arginine 65.

Belongs to the long (4 C-C) scorpion toxin superfamily. Sodium channel inhibitor family. Alpha subfamily. Expressed by the venom gland.

It is found in the secreted. Functionally, alpha toxins bind voltage-independently at site-3 of sodium channels and inhibit the inactivation of the activated channels. The toxin affect mammalian sodium channels Nav1.7/SCN9A (EC(50)=4.5 nM), Nav1.4/SCN4A (EC(50)=9.6 nM), Nav1.6/SCN8A (EC(50)=30 nM), Nav1.5/SCN5A (only at micromolar concentrations), and insect sodium channel para/tipE (EC(50)=80 nM). In vivo, intraplantar administration of this toxin elicits pain behaviors, including licking and flinching of the hind paw. In Odontobuthus doriae (Yellow Iranian scorpion), this protein is Alpha-toxin OD1.